Here is a 135-residue protein sequence, read N- to C-terminus: ATP synthase epsilon chain (135 aa).

The protein belongs to the ATPase epsilon chain family. F-type ATPases have 2 components, CF(1) - the catalytic core - and CF(0) - the membrane proton channel. CF(1) has five subunits: alpha(3), beta(3), gamma(1), delta(1), epsilon(1). CF(0) has three main subunits: a, b and c.

The protein localises to the cell inner membrane. Functionally, produces ATP from ADP in the presence of a proton gradient across the membrane. The polypeptide is ATP synthase epsilon chain (Rhodopseudomonas palustris (strain BisB18)).